Consider the following 393-residue polypeptide: Bifunctional enzyme Fae/Hps (393 aa).

The tract at residues 1-161 (MYLIGEALVG…HEKDRAAHAV (161 aa)) is formaldehyde-activating enzyme. The Proton donor role is filled by histidine 17. Substrate is bound by residues aspartate 19, leucine 48, lysine 66, threonine 68, and glutamine 83. The segment at 162 to 393 (MGFKVQRLWD…IDQFRIMTDF (232 aa)) is 3-hexulose-6-phosphate synthase.

It in the N-terminal section; belongs to the formaldehyde-activating enzyme family. The protein in the C-terminal section; belongs to the HPS/KGPDC family. HPS subfamily.

The catalysed reaction is 5,6,7,8-tetrahydromethanopterin + formaldehyde = 5,10-methylenetetrahydromethanopterin + H2O. The enzyme catalyses D-ribulose 5-phosphate + formaldehyde = D-arabino-hex-3-ulose 6-phosphate. The protein operates within carbohydrate biosynthesis; D-ribose 5-phosphate biosynthesis. In terms of biological role, catalyzes the condensation of formaldehyde with tetrahydromethanopterin (H(4)MPT) to 5,10-methylenetetrahydromethanopterin. Functionally, catalyzes the reversible formation of ribulose-5-phosphate and formaldehyde from 3-hexulose-6-phosphate. The chain is Bifunctional enzyme Fae/Hps from Methanoculleus marisnigri (strain ATCC 35101 / DSM 1498 / JR1).